We begin with the raw amino-acid sequence, 436 residues long: Prenyltransferase nscD (436 aa).

It belongs to the tryptophan dimethylallyltransferase family.

The protein operates within secondary metabolite biosynthesis. In terms of biological role, prenyltransferase; part of the gene cluster that mediates the biosynthesis of neosartoricin B, a prenylated anthracenone that probably exhibits T-cell antiproliferative activity, suggestive of a physiological role as an immunosuppressive agent. The non-reducing polyketide synthase nscA probably synthesizes and cyclizes the decaketide backbone. The hydrolase nscB then mediates the product release through hydrolysis followed by spontaneous decarboxylation. The prenyltransferase nscD catalyzes the addition of the dimethylallyl group to the aromatic C5. The FAD-dependent monooxygenase nscC is then responsible for the stereospecific hydroxylation at C2. Neosartoricin B can be converted into two additional compounds neosartoricins C and D. Neosartoricin C is a spirocyclic compound that is cyclized through the attack of C3 hydroxyl on C14, followed by dehydration. On the other hand, neosartoricin D is a further cyclized compound in which attack of C2 on C14 in neosartoricin C results in the formation of the acetal-containing dioxabicyclo-octanone ring. Both of these compounds are novel and possibly represent related metabolites of the gene cluster. The sequence is that of Prenyltransferase nscD from Trichophyton rubrum (strain ATCC MYA-4607 / CBS 118892) (Athlete's foot fungus).